The sequence spans 317 residues: Ribosomal protein L11 methyltransferase (317 aa).

Residues threonine 162, glycine 183, aspartate 205, and asparagine 248 each coordinate S-adenosyl-L-methionine.

It belongs to the methyltransferase superfamily. PrmA family.

Its subcellular location is the cytoplasm. It carries out the reaction L-lysyl-[protein] + 3 S-adenosyl-L-methionine = N(6),N(6),N(6)-trimethyl-L-lysyl-[protein] + 3 S-adenosyl-L-homocysteine + 3 H(+). In terms of biological role, methylates ribosomal protein L11. The polypeptide is Ribosomal protein L11 methyltransferase (Alkaliphilus metalliredigens (strain QYMF)).